The following is a 154-amino-acid chain: Myoglobin (154 aa).

Residues 2 to 148 (GLSDGEWQQV…FRNDIAAKYK (147 aa)) enclose the Globin domain. Ser-4 carries the post-translational modification Phosphoserine. His-65 contributes to the nitrite binding site. An O2-binding site is contributed by His-65. Heme b is bound at residue His-94.

It belongs to the globin family. As to quaternary structure, monomeric.

The protein localises to the cytoplasm. The protein resides in the sarcoplasm. It carries out the reaction Fe(III)-heme b-[protein] + nitric oxide + H2O = Fe(II)-heme b-[protein] + nitrite + 2 H(+). The enzyme catalyses H2O2 + AH2 = A + 2 H2O. Monomeric heme protein which primary function is to store oxygen and facilitate its diffusion within muscle tissues. Reversibly binds oxygen through a pentacoordinated heme iron and enables its timely and efficient release as needed during periods of heightened demand. Depending on the oxidative conditions of tissues and cells, and in addition to its ability to bind oxygen, it also has a nitrite reductase activity whereby it regulates the production of bioactive nitric oxide. Under stress conditions, like hypoxia and anoxia, it also protects cells against reactive oxygen species thanks to its pseudoperoxidase activity. The protein is Myoglobin (MB) of Equus quagga burchellii (Burchell's zebra).